The chain runs to 506 residues: Cobyric acid synthase (506 aa).

Residues 251–448 (DITIAIVQLP…LHGLFDSDAF (198 aa)) enclose the GATase cobBQ-type domain. Catalysis depends on Cys-332, which acts as the Nucleophile. His-440 is an active-site residue.

This sequence belongs to the CobB/CobQ family. CobQ subfamily.

It functions in the pathway cofactor biosynthesis; adenosylcobalamin biosynthesis. In terms of biological role, catalyzes amidations at positions B, D, E, and G on adenosylcobyrinic A,C-diamide. NH(2) groups are provided by glutamine, and one molecule of ATP is hydrogenolyzed for each amidation. The chain is Cobyric acid synthase from Salmonella arizonae (strain ATCC BAA-731 / CDC346-86 / RSK2980).